Reading from the N-terminus, the 471-residue chain is N(6)-adenine-specific methyltransferase METTL4 (471 aa).

It belongs to the MT-A70-like family.

The protein localises to the nucleus. The enzyme catalyses a 2'-O-methyladenosine in U2 snRNA + S-adenosyl-L-methionine = an N(6)-methyl-2'-O-methyladenosine in U2 snRNA + S-adenosyl-L-homocysteine + H(+). It carries out the reaction a 2'-deoxyadenosine in DNA + S-adenosyl-L-methionine = an N(6)-methyl-2'-deoxyadenosine in DNA + S-adenosyl-L-homocysteine + H(+). In terms of biological role, n(6)-adenine-specific methyltransferase that can methylate both RNAs and DNA. Acts as a N(6)-adenine-specific RNA methyltransferase by catalyzing formation of N6,2'-O-dimethyladenosine (m6A(m)) on internal positions of U2 small nuclear RNA (snRNA): methylates the 6th position of adenine residues with a pre-deposited 2'-O-methylation. Internal m6A(m) methylation of snRNAs regulates RNA splicing. Also able to act as a N(6)-adenine-specific DNA methyltransferase by mediating methylation of DNA on the 6th position of adenine (N(6)-methyladenosine). The existence of N(6)-methyladenosine (m6A) on DNA is however unclear in mammals, and additional evidences are required to confirm the role of the N(6)-adenine-specific DNA methyltransferase activity of METTL4 in vivo. Acts as a regulator of mitochondrial transcript levels and mitochondrial DNA (mtDNA) copy number by mediating mtDNA N(6)-methylation: m6A on mtDNA reduces transcription by repressing TFAM DNA-binding and bending. N(6)-methyladenosine deposition by METTL4 regulates Polycomb silencing by triggering ubiquitination and degradation of sensor proteins ASXL1 and MPND, leading to inactivation of the PR-DUB complex and subsequent preservation of Polycomb silencing. The polypeptide is N(6)-adenine-specific methyltransferase METTL4 (Mus musculus (Mouse)).